A 283-amino-acid polypeptide reads, in one-letter code: Protease HtpX (283 aa).

Helical transmembrane passes span 4 to 24 and 33 to 53; these read ILLFLATNMAVMLVLGIILSV and GGILIMALLFGFAGSLISLFL. A Zn(2+)-binding site is contributed by His139. Glu140 is an active-site residue. Residue His143 participates in Zn(2+) binding. 2 consecutive transmembrane segments (helical) span residues 147–167 and 190–210; these read GDMVTMALLQGVLNTFVIFLS and IYFLVSMVLEMLFGVLASIIA. Position 218 (Glu218) interacts with Zn(2+).

It belongs to the peptidase M48B family. It depends on Zn(2+) as a cofactor.

The protein resides in the cell inner membrane. The polypeptide is Protease HtpX (Haemophilus influenzae (strain PittGG)).